The chain runs to 219 residues: Epididymal secretory glutathione peroxidase (219 aa).

A signal peptide spans 1–21 (MTVQLGAFYLFPLFMAGFVQT). Residue Cys-71 is part of the active site.

It belongs to the glutathione peroxidase family. As to quaternary structure, homotetramer. Proximal caput epididymis.

It is found in the secreted. It catalyses the reaction 2 glutathione + H2O2 = glutathione disulfide + 2 H2O. Functionally, may constitute a glutathione peroxidase-like protective system against peroxide damage in sperm membrane lipids. Since the purified porcine enzyme has very little activity towards hydrogen peroxide or organic hydroperoxides the protective effect is not likely to be exerted by its enzymatic activity. Instead, may protect sperm from premature acrosome reaction in the epididymis by binding to lipid peroxides, which might otherwise interact with phospholipase A2 and induce the acrosome reaction. The polypeptide is Epididymal secretory glutathione peroxidase (GPX5) (Sus scrofa (Pig)).